Reading from the N-terminus, the 193-residue chain is Ion-translocating oxidoreductase complex subunit A (193 aa).

The next 6 membrane-spanning stretches (helical) occupy residues 5-25 (ILFFISNILIENFILVKFLGL), 47-67 (FVILTSSVLLWCVNFFILLPL), 72-92 (LRIIAYMLIVSVSVQFLEIVL), 102-122 (LLGIFLPLITTNCTVLAIPLF), 134-154 (IFYGLSASLGFALVMIIFSCI), and 167-187 (FQGAPIILITVSLISITFMGF).

It belongs to the NqrDE/RnfAE family. In terms of assembly, the complex is composed of six subunits: RnfA, RnfB, RnfC, RnfD, RnfE and RnfG.

The protein resides in the cell inner membrane. Functionally, part of a membrane-bound complex that couples electron transfer with translocation of ions across the membrane. The chain is Ion-translocating oxidoreductase complex subunit A from Buchnera aphidicola subsp. Acyrthosiphon pisum (strain APS) (Acyrthosiphon pisum symbiotic bacterium).